An 85-amino-acid chain; its full sequence is Alpha-toxin Amm8 (85 aa).

Residues 1 to 19 form the signal peptide; the sequence is MNYLVMISLALLFMTGVES. The LCN-type CS-alpha/beta domain maps to 21–83; the sequence is KDGYIVNDIN…VRTKGPGRCN (63 aa). Cystine bridges form between cysteine 31-cysteine 82, cysteine 35-cysteine 55, cysteine 41-cysteine 65, and cysteine 45-cysteine 67. Residue arginine 85 is a propeptide, removed by a carboxypeptidase.

The protein belongs to the long (4 C-C) scorpion toxin superfamily. Sodium channel inhibitor family. Alpha subfamily. In terms of tissue distribution, expressed by the venom gland.

Its subcellular location is the secreted. In terms of biological role, alpha toxins bind voltage-independently at site-3 of sodium channels (Nav) and inhibit the inactivation of the activated channels, thereby blocking neuronal transmission. The toxin principally slows the inactivation process of TTX-sensitive sodium channels. It discriminates neuronal versus muscular sodium channel, as it is more potent on rat brain Nav1.2/SCN2A (EC(50)=29 nM) than on rat skeletal muscle Nav1.4/SCN4A (EC(50)=416 nM). It also shows a weak activity on Nav1.7/SCN9A (EC(50)=1.76 uM). In vivo, the toxin produces pain hypersensibility to mechanical and thermal stimuli. It also exhibits potent analgesic activity (when injected intraperitoneally), increasing hot plate and tail flick withdrawal latencies in a dose-dependent fashion. This paradoxical analgesic action, is significantly suppressed by opioid receptor antagonists, suggesting a pain-induced analgesia mechanism that involves an endogenous opioid system. This led to hypothesis that pain relief induced by peripheral administration of Amm VIII may result from sensitization of primary afferent neurons and subsequent activation of an opioid-dependent noxious inhibitory control. The protein is Alpha-toxin Amm8 of Androctonus mauritanicus mauritanicus (Scorpion).